A 75-amino-acid polypeptide reads, in one-letter code: RNA-binding protein KhpA (75 aa).

The KH domain occupies 29–75 (KVVYHLTVHPDDVGKVIGKNGRIAKAIRTVVYASKTDGNKRIYLDIM).

This sequence belongs to the KhpA RNA-binding protein family. In terms of assembly, forms a complex with KhpB.

The protein localises to the cytoplasm. A probable RNA chaperone. Forms a complex with KhpB which binds to cellular RNA and controls its expression. Plays a role in peptidoglycan (PG) homeostasis and cell length regulation. This Oceanobacillus iheyensis (strain DSM 14371 / CIP 107618 / JCM 11309 / KCTC 3954 / HTE831) protein is RNA-binding protein KhpA.